The primary structure comprises 253 residues: Phosphate import ATP-binding protein PstB (253 aa).

The ABC transporter domain maps to 8–248 (IQVRDLDLFY…PRDKRTEDYI (241 aa)). An ATP-binding site is contributed by 40 to 47 (GPSGCGKS).

It belongs to the ABC transporter superfamily. Phosphate importer (TC 3.A.1.7) family. As to quaternary structure, the complex is composed of two ATP-binding proteins (PstB), two transmembrane proteins (PstC and PstA) and a solute-binding protein (PstS).

Its subcellular location is the cell membrane. It carries out the reaction phosphate(out) + ATP + H2O = ADP + 2 phosphate(in) + H(+). Functionally, part of the ABC transporter complex PstSACB involved in phosphate import. Responsible for energy coupling to the transport system. The protein is Phosphate import ATP-binding protein PstB of Clostridium perfringens (strain ATCC 13124 / DSM 756 / JCM 1290 / NCIMB 6125 / NCTC 8237 / Type A).